The sequence spans 217 residues: 3,4-dihydroxy-2-butanone 4-phosphate synthase (217 aa).

D-ribulose 5-phosphate is bound by residues 37 to 38 (RE), D42, 150 to 154 (RRGHT), and E174. E38 is a Mg(2+) binding site. H153 lines the Mg(2+) pocket.

This sequence belongs to the DHBP synthase family. As to quaternary structure, homodimer. Requires Mg(2+) as cofactor. It depends on Mn(2+) as a cofactor.

It catalyses the reaction D-ribulose 5-phosphate = (2S)-2-hydroxy-3-oxobutyl phosphate + formate + H(+). It functions in the pathway cofactor biosynthesis; riboflavin biosynthesis; 2-hydroxy-3-oxobutyl phosphate from D-ribulose 5-phosphate: step 1/1. Catalyzes the conversion of D-ribulose 5-phosphate to formate and 3,4-dihydroxy-2-butanone 4-phosphate. The protein is 3,4-dihydroxy-2-butanone 4-phosphate synthase of Shewanella loihica (strain ATCC BAA-1088 / PV-4).